We begin with the raw amino-acid sequence, 362 residues long: Chorismate synthase (362 aa).

Arginine 47 lines the NADP(+) pocket. FMN is bound by residues 124–126, glycine 286, 301–305, and arginine 327; these read RSS and KPTAT.

This sequence belongs to the chorismate synthase family. As to quaternary structure, homotetramer. The cofactor is FMNH2.

It catalyses the reaction 5-O-(1-carboxyvinyl)-3-phosphoshikimate = chorismate + phosphate. The protein operates within metabolic intermediate biosynthesis; chorismate biosynthesis; chorismate from D-erythrose 4-phosphate and phosphoenolpyruvate: step 7/7. Its function is as follows. Catalyzes the anti-1,4-elimination of the C-3 phosphate and the C-6 proR hydrogen from 5-enolpyruvylshikimate-3-phosphate (EPSP) to yield chorismate, which is the branch point compound that serves as the starting substrate for the three terminal pathways of aromatic amino acid biosynthesis. This reaction introduces a second double bond into the aromatic ring system. This Nostoc punctiforme (strain ATCC 29133 / PCC 73102) protein is Chorismate synthase.